Consider the following 363-residue polypeptide: Pyrimidine monooxygenase RutA (363 aa).

FMN is bound by residues 49–50 (IK), Asn115, Glu124, 140–141 (RY), and Ser190.

This sequence belongs to the NtaA/SnaA/DszA monooxygenase family. RutA subfamily.

It catalyses the reaction uracil + FMNH2 + NADH + O2 = (Z)-3-ureidoacrylate + FMN + NAD(+) + H2O + H(+). The catalysed reaction is thymine + FMNH2 + NADH + O2 = (Z)-2-methylureidoacrylate + FMN + NAD(+) + H2O + H(+). In terms of biological role, catalyzes the pyrimidine ring opening between N-3 and C-4 by an unusual flavin hydroperoxide-catalyzed mechanism, adding oxygen atoms in the process to yield ureidoacrylate peracid, that immediately reacts with FMN forming ureidoacrylate and FMN-N(5)-oxide. The FMN-N(5)-oxide reacts spontaneously with NADH to produce FMN. Requires the flavin reductase RutF to regenerate FMN in vivo. The protein is Pyrimidine monooxygenase RutA of Escherichia coli O44:H18 (strain 042 / EAEC).